Reading from the N-terminus, the 439-residue chain is Glucose-1-phosphate adenylyltransferase (439 aa).

Alpha-D-glucose 1-phosphate contacts are provided by residues Tyr-122, Gly-187, 202–203 (EK), and Ser-220.

It belongs to the bacterial/plant glucose-1-phosphate adenylyltransferase family. As to quaternary structure, homotetramer.

The catalysed reaction is alpha-D-glucose 1-phosphate + ATP + H(+) = ADP-alpha-D-glucose + diphosphate. The protein operates within glycan biosynthesis; glycogen biosynthesis. Functionally, involved in the biosynthesis of ADP-glucose, a building block required for the elongation reactions to produce glycogen. Catalyzes the reaction between ATP and alpha-D-glucose 1-phosphate (G1P) to produce pyrophosphate and ADP-Glc. This is Glucose-1-phosphate adenylyltransferase from Thiobacillus denitrificans (strain ATCC 25259 / T1).